The primary structure comprises 455 residues: Argininosuccinate lyase (455 aa).

It belongs to the lyase 1 family. Argininosuccinate lyase subfamily.

It is found in the cytoplasm. The enzyme catalyses 2-(N(omega)-L-arginino)succinate = fumarate + L-arginine. It functions in the pathway amino-acid biosynthesis; L-arginine biosynthesis; L-arginine from L-ornithine and carbamoyl phosphate: step 3/3. This Shewanella sp. (strain MR-4) protein is Argininosuccinate lyase.